The following is a 371-amino-acid chain: Peptide chain release factor 2 (371 aa).

N5-methylglutamine is present on glutamine 253.

Belongs to the prokaryotic/mitochondrial release factor family. In terms of processing, methylated by PrmC. Methylation increases the termination efficiency of RF2.

Its subcellular location is the cytoplasm. Functionally, peptide chain release factor 2 directs the termination of translation in response to the peptide chain termination codons UGA and UAA. The chain is Peptide chain release factor 2 (prfB) from Mycobacterium bovis (strain ATCC BAA-935 / AF2122/97).